The chain runs to 251 residues: Hydroxyacylglutathione hydrolase (251 aa).

Zn(2+) is bound by residues His-53, His-55, Asp-57, His-58, His-110, Asp-127, and His-165.

Belongs to the metallo-beta-lactamase superfamily. Glyoxalase II family. In terms of assembly, monomer. Requires Zn(2+) as cofactor.

The enzyme catalyses an S-(2-hydroxyacyl)glutathione + H2O = a 2-hydroxy carboxylate + glutathione + H(+). Its pathway is secondary metabolite metabolism; methylglyoxal degradation; (R)-lactate from methylglyoxal: step 2/2. In terms of biological role, thiolesterase that catalyzes the hydrolysis of S-D-lactoyl-glutathione to form glutathione and D-lactic acid. The protein is Hydroxyacylglutathione hydrolase of Escherichia fergusonii (strain ATCC 35469 / DSM 13698 / CCUG 18766 / IAM 14443 / JCM 21226 / LMG 7866 / NBRC 102419 / NCTC 12128 / CDC 0568-73).